Consider the following 426-residue polypeptide: Pyrophosphate--fructose 6-phosphate 1-phosphotransferase 1 (426 aa).

A diphosphate-binding site is contributed by G15. Position 114 (D114) interacts with Mg(2+). Substrate-binding positions include 140 to 142 (TID), 186 to 188 (MGR), E247, and 308 to 311 (YELR). D142 functions as the Proton acceptor in the catalytic mechanism.

This sequence belongs to the phosphofructokinase type A (PFKA) family. PPi-dependent PFK group II subfamily. Clade 'Short' sub-subfamily. In terms of assembly, homotetramer. Requires Mg(2+) as cofactor.

The protein localises to the cytoplasm. It carries out the reaction beta-D-fructose 6-phosphate + diphosphate = beta-D-fructose 1,6-bisphosphate + phosphate + H(+). The protein operates within carbohydrate degradation; glycolysis; D-glyceraldehyde 3-phosphate and glycerone phosphate from D-glucose: step 3/4. Non-allosteric. Functionally, catalyzes the phosphorylation of D-fructose 6-phosphate, the first committing step of glycolysis. Uses inorganic phosphate (PPi) as phosphoryl donor instead of ATP like common ATP-dependent phosphofructokinases (ATP-PFKs), which renders the reaction reversible, and can thus function both in glycolysis and gluconeogenesis. Consistently, PPi-PFK can replace the enzymes of both the forward (ATP-PFK) and reverse (fructose-bisphosphatase (FBPase)) reactions. The polypeptide is Pyrophosphate--fructose 6-phosphate 1-phosphotransferase 1 (Pfk1) (Trichomonas vaginalis (strain ATCC PRA-98 / G3)).